A 297-amino-acid chain; its full sequence is Putative F-box protein At2g19630 (297 aa).

One can recognise an F-box domain in the interval 11–60 (TKNSLQIPIDLIIEIFLRLSVNSIARCRCVSKQWASTLSRPYFTELFLTR).

The chain is Putative F-box protein At2g19630 from Arabidopsis thaliana (Mouse-ear cress).